The following is a 240-amino-acid chain: UDP-2,3-diacylglucosamine hydrolase (240 aa).

Mn(2+) contacts are provided by D7, H9, D40, N78, and H113. Substrate is bound at residue 78–79; it reads NR. Substrate contacts are provided by D121, S159, T163, K166, and H194. Mn(2+) is bound by residues H194 and H196.

Belongs to the LpxH family. Requires Mn(2+) as cofactor.

The protein resides in the cell inner membrane. It catalyses the reaction UDP-2-N,3-O-bis[(3R)-3-hydroxytetradecanoyl]-alpha-D-glucosamine + H2O = 2-N,3-O-bis[(3R)-3-hydroxytetradecanoyl]-alpha-D-glucosaminyl 1-phosphate + UMP + 2 H(+). The protein operates within glycolipid biosynthesis; lipid IV(A) biosynthesis; lipid IV(A) from (3R)-3-hydroxytetradecanoyl-[acyl-carrier-protein] and UDP-N-acetyl-alpha-D-glucosamine: step 4/6. Functionally, hydrolyzes the pyrophosphate bond of UDP-2,3-diacylglucosamine to yield 2,3-diacylglucosamine 1-phosphate (lipid X) and UMP by catalyzing the attack of water at the alpha-P atom. Involved in the biosynthesis of lipid A, a phosphorylated glycolipid that anchors the lipopolysaccharide to the outer membrane of the cell. The sequence is that of UDP-2,3-diacylglucosamine hydrolase from Pseudomonas putida (strain W619).